The chain runs to 150 residues: Avidin-related protein 6 (150 aa).

The signal sequence occupies residues 1–24 (MVHATSPLLLLLLLSLALVAPGLS). The 122-residue stretch at 26–147 (RKCSLTGEWD…GYNNFTRQRT (122 aa)) folds into the Avidin-like domain. A disulfide bridge links cysteine 28 with cysteine 105. Positions 36 and 40 each coordinate biotin. N-linked (GlcNAc...) asparagine glycosylation is present at asparagine 54. Tyrosine 57, threonine 59, and aspartate 63 together coordinate biotin. Asparagine 93 carries N-linked (GlcNAc...) asparagine glycosylation. Biotin-binding residues include serine 95, serine 99, and asparagine 140. The N-linked (GlcNAc...) asparagine glycan is linked to asparagine 141.

Belongs to the avidin/streptavidin family. In terms of assembly, homotetramer. Glycosylated.

The protein localises to the secreted. Its function is as follows. Forms a strong non-covalent specific complex with biotin. This Gallus gallus (Chicken) protein is Avidin-related protein 6 (AVR6).